Reading from the N-terminus, the 805-residue chain is Acetyl-CoA decarbonylase/synthase complex subunit alpha 3 (805 aa).

[4Fe-4S] cluster is bound by residues Cys-72, Cys-75, Cys-76, Cys-78, Cys-83, and Cys-93. CO is bound at residue His-116. Residues His-249, Cys-277, and Cys-322 each contribute to the [Ni-4Fe-4S] cluster site. 4Fe-4S ferredoxin-type domains follow at residues 407–435 (EEFKVYIDKCVKCGECMLACPEELDIPEA) and 445–474 (EYLEALHDVCIGCRRCEQVCKKEIPILNVL). Residues Cys-416, Cys-419, Cys-422, Cys-426, Cys-454, Cys-457, Cys-460, and Cys-464 each contribute to the [4Fe-4S] cluster site. [Ni-4Fe-4S] cluster is bound by residues Cys-522, Cys-551, and Cys-586.

The protein belongs to the Ni-containing carbon monoxide dehydrogenase family. Heterotetramer of two alpha and two epsilon subunits. The ACDS complex is made up of alpha, epsilon, beta, gamma and delta subunits with a probable stoichiometry of (alpha(2)epsilon(2))(4)-beta(8)-(gamma(1)delta(1))(8). [4Fe-4S] cluster serves as cofactor. It depends on [Ni-4Fe-4S] cluster as a cofactor.

The catalysed reaction is CO + 2 oxidized [2Fe-2S]-[ferredoxin] + H2O = 2 reduced [2Fe-2S]-[ferredoxin] + CO2 + 2 H(+). The protein operates within one-carbon metabolism; methanogenesis from acetate. In terms of biological role, part of the ACDS complex that catalyzes the reversible cleavage of acetyl-CoA, allowing growth on acetate as sole source of carbon and energy. The alpha-epsilon subcomponent functions as a carbon monoxide dehydrogenase. The polypeptide is Acetyl-CoA decarbonylase/synthase complex subunit alpha 3 (Methanosarcina acetivorans (strain ATCC 35395 / DSM 2834 / JCM 12185 / C2A)).